The sequence spans 60 residues: uncharacterized protein (60 aa).

A signal peptide spans 1–21 (MNKLLKLFFITIIIYNNIAFA).

This is an uncharacterized protein from Rickettsia prowazekii (strain Madrid E).